The following is a 205-amino-acid chain: UPF0637 protein OB1420 (205 aa).

The protein belongs to the UPF0637 family.

The chain is UPF0637 protein OB1420 from Oceanobacillus iheyensis (strain DSM 14371 / CIP 107618 / JCM 11309 / KCTC 3954 / HTE831).